The primary structure comprises 209 residues: Uracil phosphoribosyltransferase (209 aa).

5-phospho-alpha-D-ribose 1-diphosphate is bound by residues Arg79, Arg104, and 131 to 139 (DPMLATGNS). Uracil contacts are provided by residues Ile194 and 199–201 (GDA). Residue Asp200 coordinates 5-phospho-alpha-D-ribose 1-diphosphate.

The protein belongs to the UPRTase family. Requires Mg(2+) as cofactor.

The catalysed reaction is UMP + diphosphate = 5-phospho-alpha-D-ribose 1-diphosphate + uracil. It functions in the pathway pyrimidine metabolism; UMP biosynthesis via salvage pathway; UMP from uracil: step 1/1. Its activity is regulated as follows. Allosterically activated by GTP. In terms of biological role, catalyzes the conversion of uracil and 5-phospho-alpha-D-ribose 1-diphosphate (PRPP) to UMP and diphosphate. The polypeptide is Uracil phosphoribosyltransferase (Rhizobium meliloti (strain 1021) (Ensifer meliloti)).